The chain runs to 141 residues: MAIERTISIIKPDAVGKNVIGKIYSRFEENGLKIVAAKMKQLTLKEAQEFYAVHKDRPFYAGLVEFMTGGPVMIQVLEGENAVLKNRELMGATNPTEAAEGTIRADFATSVSINAVHGSDSVENAALEIAYFFSQTEICPR.

Residues Lys-11, Phe-59, Arg-87, Thr-93, Arg-104, and Asn-114 each coordinate ATP. His-117 (pros-phosphohistidine intermediate) is an active-site residue.

Belongs to the NDK family. As to quaternary structure, homotetramer. Requires Mg(2+) as cofactor.

It localises to the cytoplasm. It catalyses the reaction a 2'-deoxyribonucleoside 5'-diphosphate + ATP = a 2'-deoxyribonucleoside 5'-triphosphate + ADP. The enzyme catalyses a ribonucleoside 5'-diphosphate + ATP = a ribonucleoside 5'-triphosphate + ADP. Its function is as follows. Major role in the synthesis of nucleoside triphosphates other than ATP. The ATP gamma phosphate is transferred to the NDP beta phosphate via a ping-pong mechanism, using a phosphorylated active-site intermediate. In Neisseria gonorrhoeae (strain NCCP11945), this protein is Nucleoside diphosphate kinase.